Reading from the N-terminus, the 240-residue chain is Histidinol dehydrogenase homolog oryD (240 aa).

Gln64 and His67 together coordinate Zn(2+). Glu134 functions as the Proton acceptor in the catalytic mechanism. Residues Asp168 and His228 each contribute to the Zn(2+) site.

It belongs to the histidinol dehydrogenase family. Zn(2+) serves as cofactor.

The protein operates within secondary metabolite biosynthesis. In terms of biological role, histidinol dehydrogenase homolog; part of the gene cluster that mediates the biosynthesis of oryzines, natural products with an unusual maleidride backbone. The two subunits of the fungal fatty acid synthase oryfasA and oryfasB probably form octenoic acid. This fatty acid is most likely activated by the acyl-CoA ligase oryP to give octenyl-CoA before the citrate synthase-like protein oryE catalyzes condensation with oxaloacetate to form tricarboxylic acid. The next steps of the pathways are conjectural, but a favorite possible route has been proposed, beginning with decarboxylation and concomitant dehydration by the decarboxylase oryM, followed by tautomerization, which may lead to the production of a diene intermediate. Reduction of this diene intermediate could give the known metabolite piliformic acid. On the pathway to oryzine B and oryzine A, however, hydroxylation of the diene by the alpha-ketoglutarate-dependent dioxygenase oryG and lactonisation by the lactonohydrolases oryH or oryL could give oryzine B directly. Finally, enoyl reduction by the dehydrogenase oryD would then convert oryzine B into oryzine A. In Aspergillus oryzae (strain ATCC 42149 / RIB 40) (Yellow koji mold), this protein is Histidinol dehydrogenase homolog oryD.